Consider the following 251-residue polypeptide: MRRKIVAGNWKLHGSRAFATELVAKVAAHMPLEGVEVVILPPLPYLGDLIEDFEAHHLSFGAQDVSSNEKGAYTGEVSASMLVDVGAGYGLVGHSERRQYHQESSELVARKFAAALHAGLIPVLCVGESLEQREAGQTEAILRAQLDPVLALVGSAGFAGAVLAYEPIWAIGTGRTATPEQAQAVHAFLRGEVAKADARIADSLPILYGGSVKPDNAGELFAQPDVDGGLVGGASLVAEDFLAIARAAAAC.

Position 9-11 (Asn9–Lys11) interacts with substrate. Residue His94 is the Electrophile of the active site. The active-site Proton acceptor is Glu166. Substrate contacts are provided by residues Gly172, Ser211, and Gly232 to Gly233.

It belongs to the triosephosphate isomerase family. In terms of assembly, homodimer.

The protein resides in the cytoplasm. The enzyme catalyses D-glyceraldehyde 3-phosphate = dihydroxyacetone phosphate. Its pathway is carbohydrate biosynthesis; gluconeogenesis. It functions in the pathway carbohydrate degradation; glycolysis; D-glyceraldehyde 3-phosphate from glycerone phosphate: step 1/1. Functionally, involved in the gluconeogenesis. Catalyzes stereospecifically the conversion of dihydroxyacetone phosphate (DHAP) to D-glyceraldehyde-3-phosphate (G3P). This Xanthomonas axonopodis pv. citri (strain 306) protein is Triosephosphate isomerase.